Here is an 891-residue protein sequence, read N- to C-terminus: Alanine--tRNA ligase (891 aa).

The Zn(2+) site is built by His564, His568, Cys677, and His681.

Belongs to the class-II aminoacyl-tRNA synthetase family. It depends on Zn(2+) as a cofactor.

It is found in the cytoplasm. The catalysed reaction is tRNA(Ala) + L-alanine + ATP = L-alanyl-tRNA(Ala) + AMP + diphosphate. Catalyzes the attachment of alanine to tRNA(Ala) in a two-step reaction: alanine is first activated by ATP to form Ala-AMP and then transferred to the acceptor end of tRNA(Ala). Also edits incorrectly charged Ser-tRNA(Ala) and Gly-tRNA(Ala) via its editing domain. The protein is Alanine--tRNA ligase of Rhodopseudomonas palustris (strain HaA2).